A 633-amino-acid chain; its full sequence is Terminal nucleotidyltransferase 4B (633 aa).

The disordered stretch occupies residues 1–115; it reads MFRSGERPLG…GGGRADGGGG (115 aa). Positions 25–34 are enriched in polar residues; that stretch reads ETTNNNNNHH. Low complexity-rich tracts occupy residues 36-52 and 60-70; these read PAAW…ASPV and RPAAALPASES. The segment covering 87 to 98 has biased composition (polar residues); the sequence is ASTYGLNYSLLQ. Positions 103–115 are enriched in gly residues; sequence RAAGGGRADGGGG. Positions 191 and 193 each coordinate Mg(2+). Residues Gly254, Lys279, Ser297, Tyr298, Asn382, and Arg386 each contribute to the ATP site. Residues 322–382 form the PAP-associated domain; the sequence is NYGVLLIEFF…YIEDPLQPGN (61 aa). The segment at 484 to 633 is disordered; it reads LGKCRSNASE…RDAPLSELCR (150 aa). Residues 492-519 show a composition bias toward low complexity; it reads SEPLSKHSSNSSSGPVSSSSATQSSSSD. A Glycyl lysine isopeptide (Lys-Gly) (interchain with G-Cter in SUMO2) cross-link involves residue Lys531. A compositionally biased stretch (polar residues) spans 542 to 552; it reads RVGSQDVSLEV. Ser545 bears the Phosphoserine mark. Residues Lys558, Lys573, and Lys587 each participate in a glycyl lysine isopeptide (Lys-Gly) (interchain with G-Cter in SUMO2) cross-link. Residues 559–614 are compositionally biased toward polar residues; the sequence is MQSTQTTNTPNNANKSQHGSARLFRSSSKGFQGTAQTSHGALMTSKQHQGKSNTQY. The short motif at 618–624 is the Basic, involved in binding of the RNA primer element; the sequence is KKRRHKR.

The protein belongs to the DNA polymerase type-B-like family. In terms of assembly, component of a nucleolar TRAMP-like complex, an ATP-dependent exosome regulatory complex consisting of a helicase (MTREX), an oligadenylate polymerase (TENT4B or TENT4A), and a substrate specific RNA-binding factor (ZCCHC7 or ZCCHC8). Several TRAMP-like complexes exist with specific compositions and are associated with nuclear, or nucleolar RNA exosomes. Mg(2+) serves as cofactor. It depends on Mn(2+) as a cofactor.

The protein resides in the nucleus. It is found in the nucleolus. Its subcellular location is the cytoplasm. It catalyses the reaction RNA(n) + ATP = RNA(n)-3'-adenine ribonucleotide + diphosphate. Its function is as follows. Terminal nucleotidyltransferase that catalyzes preferentially the transfer of ATP and GTP on RNA 3' poly(A) tail creating a heterogeneous 3' poly(A) tail leading to mRNAs stabilization by protecting mRNAs from active deadenylation. Also functions as a catalytic subunit of a TRAMP-like complex which has a poly(A) RNA polymerase activity and is involved in a post-transcriptional quality control mechanism. Polyadenylation with short oligo(A) tails is required for the degradative activity of the exosome on several of its nuclear RNA substrates. Doesn't need a cofactor for polyadenylation activity (in vitro). Plays a role in replication-dependent histone mRNA degradation, probably through terminal uridylation of mature histone mRNAs. May play a role in sister chromatid cohesion. The polypeptide is Terminal nucleotidyltransferase 4B (Mus musculus (Mouse)).